The chain runs to 37 residues: uncharacterized protein (37 aa).

The tract at residues 1–37 (MGQVEKARQGQFARPHHSDSQRRVRAWSRIQRRARSF) is disordered. Residues 23 to 37 (RVRAWSRIQRRARSF) are compositionally biased toward basic residues.

This is an uncharacterized protein from Bacillus phage phi105 (Bacteriophage phi-105).